The sequence spans 368 residues: Polymerase delta-interacting protein 2 (368 aa).

The N-terminal 51 residues, 1-51 (MAACTARRALAVGSRWWSRSLTGARWPRPLCAAAGAGAFSPASTTTTRRHL), are a transit peptide targeting the mitochondrion. The region spanning 235–360 (RETTENIRVT…FSLESNKDEK (126 aa)) is the ApaG domain. Thr292 is modified (phosphothreonine).

Interacts with PCNA and POLD2. Interacts with SSBP1. Interacts with PRIMPOL; leading to enhance DNA polymerase activity of PRIMPOL. Interacts with POLH. Interacts with POLD1; leading to stimulate DNA polymerase activity of POLD1.

It is found in the mitochondrion matrix. Its subcellular location is the nucleus. Functionally, involved in DNA damage tolerance by regulating translesion synthesis (TLS) of templates carrying DNA damage lesions such as 8oxoG and abasic sites. May act by stimulating activity of DNA polymerases involved in TLS, such as PRIMPOL and polymerase delta (POLD1). The chain is Polymerase delta-interacting protein 2 from Homo sapiens (Human).